Reading from the N-terminus, the 721-residue chain is MAKKIGVTMEVGNDGVAVITISNPPVNSLASPIISGLKEKFRDANQRNDVKAIVLIGNNGRFSGGFDINVFQQVHKTGDLSLMPEVSVELVCNLMEDSRKPVVAAVEGLALGGGLELAMACHARVAAPKAQLGLPELTLGVIPGFGGTQRLPRLVGLAKATDMILLSKSISSEEGHKLGLIDALVPPGDVLSTSRKWALDIAEGRKPFLQSLHRTDKIGSLSEARAILKNSRQLAKKIAPNMPQHHACIEVIEEGIIHGGYSGVLKEAEVFKQLVLSDTAKGLVHVFFAQRATSKVPNVTDVGLKPRPIKKVAVIGGGLMGSGIATALLLSNIRVVLKEINSEFLMKGIKSVEANMKSLVSRGKLTQDKAGKALSLFKGVLDYTEFNDVDMVIEAVIENIQLKQNIFKEIEKVCSPHCILASNTSTIDLDVIGEKTNSKDRIVGAHFFSPAHLMPLLEIVRSKNTSAQVILDLMAVGKAIKKVPVVVGNCIGFAVNRTFFPYSQAAHMLANLGVDLFRIDSVITSFGLPLGPFQLGDLAGHGIGLAVGPIYAKVYGDRMFRSPMTELLLKSGRNGKINGRGYYIYEKGSKPKPDPSVLSIVEKSRKLTNIMPGGKPISVTDKEIVEMILFPVVNEACRVLDEGVVIRASDLDIASVLGMSFPSYRGGIVFWADTVGPKYIYERLKKLSETYGSFFKPSRYLEERAMNGMLLSESKSSRSKL.

Catalysis depends on E116, which acts as the Nucleophile. Residue E136 is the Proton acceptor of the active site. The Microbody targeting signal motif lies at S719–L721.

In the N-terminal section; belongs to the enoyl-CoA hydratase/isomerase family. It in the central section; belongs to the 3-hydroxyacyl-CoA dehydrogenase family. Widely expressed.

The protein resides in the peroxisome. It carries out the reaction a (3S)-3-hydroxyacyl-CoA = a (2E)-enoyl-CoA + H2O. The enzyme catalyses a 4-saturated-(3S)-3-hydroxyacyl-CoA = a (3E)-enoyl-CoA + H2O. The catalysed reaction is (3S)-3-hydroxybutanoyl-CoA = (2E)-butenoyl-CoA + H2O. It catalyses the reaction (3S)-hydroxyoctanoyl-CoA = (2E)-octenoyl-CoA + H2O. It carries out the reaction (3S)-3-hydroxydodecanoyl-CoA = (2E)-dodecenoyl-CoA + H2O. The enzyme catalyses (3S)-hydroxytetradecanoyl-CoA = (2E)-tetradecenoyl-CoA + H2O. The catalysed reaction is (3S)-hydroxyhexanoyl-CoA = (2E)-hexenoyl-CoA + H2O. It catalyses the reaction a (3Z)-enoyl-CoA = a 4-saturated (2E)-enoyl-CoA. It carries out the reaction a (3E)-enoyl-CoA = a 4-saturated (2E)-enoyl-CoA. The enzyme catalyses (3S)-3-hydroxybutanoyl-CoA = (3R)-3-hydroxybutanoyl-CoA. The catalysed reaction is a (3S)-3-hydroxyacyl-CoA + NAD(+) = a 3-oxoacyl-CoA + NADH + H(+). It catalyses the reaction (3S)-3-hydroxybutanoyl-CoA + NAD(+) = acetoacetyl-CoA + NADH + H(+). It carries out the reaction (3S)-hydroxyhexanoyl-CoA + NAD(+) = 3-oxohexanoyl-CoA + NADH + H(+). The enzyme catalyses (3S)-hydroxyoctanoyl-CoA + NAD(+) = 3-oxooctanoyl-CoA + NADH + H(+). The catalysed reaction is (3S)-3-hydroxydodecanoyl-CoA + NAD(+) = 3-oxododecanoyl-CoA + NADH + H(+). It catalyses the reaction (3S)-hydroxytetradecanoyl-CoA + NAD(+) = 3-oxotetradecanoyl-CoA + NADH + H(+). The protein operates within lipid metabolism; fatty acid beta-oxidation. Involved in peroxisomal fatty acid beta-oxidation. Required for wound-induced jasmonate biosynthesis. Possesses enoyl-CoA hydratase activity against short chain substrates (C4-C6) and 3-hydroxyacyl-CoA dehydrogenase activity against chains of variable sizes (C6-C16). Possesses cinnamoyl-CoA hydratase activity and is involved in the peroxisomal beta-oxidation pathway for the biosynthesis of benzoic acid (BA). Required for the accumulation in seeds of benzoylated glucosinolates (BGs) and substituted hydroxybenzoylated choline esters, which are BA-containing secondary metabolites. Required for salicylic acid (SA) in seeds. This is Peroxisomal fatty acid beta-oxidation multifunctional protein AIM1 (AIM1) from Arabidopsis thaliana (Mouse-ear cress).